Reading from the N-terminus, the 278-residue chain is HTH-type transcriptional activator RhaS (278 aa).

Residues 174–272 (NLLLAWLEDH…NWSPRDIRQG (99 aa)) enclose the HTH araC/xylS-type domain. 2 DNA-binding regions (H-T-H motif) span residues 191-212 (DAVA…KQQT) and 239-262 (VTDI…RREF).

In terms of assembly, binds DNA as a dimer.

The protein resides in the cytoplasm. In terms of biological role, activates expression of the rhaBAD and rhaT operons. This Escherichia coli O139:H28 (strain E24377A / ETEC) protein is HTH-type transcriptional activator RhaS.